The following is a 327-amino-acid chain: GMP reductase (327 aa).

C176 acts as the Thioimidate intermediate in catalysis. 205–228 (IIADGGIRTHGDIAKSIRFGASMV) is a binding site for NADP(+).

This sequence belongs to the IMPDH/GMPR family. GuaC type 2 subfamily.

It carries out the reaction IMP + NH4(+) + NADP(+) = GMP + NADPH + 2 H(+). In terms of biological role, catalyzes the irreversible NADPH-dependent deamination of GMP to IMP. It functions in the conversion of nucleobase, nucleoside and nucleotide derivatives of G to A nucleotides, and in maintaining the intracellular balance of A and G nucleotides. This chain is GMP reductase, found in Streptococcus agalactiae serotype Ia (strain ATCC 27591 / A909 / CDC SS700).